The following is a 559-amino-acid chain: Arginine--tRNA ligase (559 aa).

A 'HIGH' region motif is present at residues 116-126 (ANPNGPLHVGH).

Belongs to the class-I aminoacyl-tRNA synthetase family.

The protein localises to the cytoplasm. It carries out the reaction tRNA(Arg) + L-arginine + ATP = L-arginyl-tRNA(Arg) + AMP + diphosphate. The sequence is that of Arginine--tRNA ligase from Methanosphaerula palustris (strain ATCC BAA-1556 / DSM 19958 / E1-9c).